The primary structure comprises 101 residues: Nucleoid-associated protein Bind_0255 (101 aa).

Belongs to the YbaB/EbfC family. As to quaternary structure, homodimer.

Its subcellular location is the cytoplasm. It is found in the nucleoid. In terms of biological role, binds to DNA and alters its conformation. May be involved in regulation of gene expression, nucleoid organization and DNA protection. The polypeptide is Nucleoid-associated protein Bind_0255 (Beijerinckia indica subsp. indica (strain ATCC 9039 / DSM 1715 / NCIMB 8712)).